The chain runs to 576 residues: Polypeptide N-acetylgalactosaminyltransferase 12 (576 aa).

Residues 1–19 (MWGRAVRRRCPRGLRRGRE) lie on the Cytoplasmic side of the membrane. Residues 20–37 (ALLALLALAGLGALLRAR) traverse the membrane as a helical; Signal-anchor for type II membrane protein segment. Positions 38–58 (SRSGTVDPGPPRTPLPGRHEP) are disordered. The Lumenal segment spans residues 38–576 (SRSGTVDPGP…QRWFFKERMS (539 aa)). 5 disulfides stabilise this stretch: C120-C353, C344-C417, C453-C474, C501-C516, and C542-C561. The tract at residues 130–239 (LPKTSVVIAF…EGWLEPLLQR (110 aa)) is catalytic subdomain A. Substrate contacts are provided by D171 and R200. Mn(2+)-binding residues include D223 and H225. Positions 299 to 361 (VIRSPTMAGG…PCSHVGHVFP (63 aa)) are catalytic subdomain B. W330 is a binding site for substrate. Residue H358 participates in Mn(2+) binding. Residue Y366 participates in substrate binding. In terms of domain architecture, Ricin B-type lectin spans 440-572 (FFGMLQNRGL…NSDNQRWFFK (133 aa)).

This sequence belongs to the glycosyltransferase 2 family. GalNAc-T subfamily. The cofactor is Mn(2+).

It localises to the golgi apparatus membrane. The enzyme catalyses L-seryl-[protein] + UDP-N-acetyl-alpha-D-galactosamine = a 3-O-[N-acetyl-alpha-D-galactosaminyl]-L-seryl-[protein] + UDP + H(+). The catalysed reaction is L-threonyl-[protein] + UDP-N-acetyl-alpha-D-galactosamine = a 3-O-[N-acetyl-alpha-D-galactosaminyl]-L-threonyl-[protein] + UDP + H(+). Its pathway is protein modification; protein glycosylation. Functionally, catalyzes the initial reaction in O-linked oligosaccharide biosynthesis, the transfer of an N-acetyl-D-galactosamine residue to a serine or threonine residue on the protein receptor. Has activity toward non-glycosylated peptides such as Muc5AC, Muc1a and EA2, and no detectable activity with Muc2 and Muc7. Displays enzymatic activity toward the Gal-NAc-Muc5AC glycopeptide, but no detectable activity to mono-GalNAc-glycosylated Muc1a, Muc2, Muc7 and EA2. May play an important role in the initial step of mucin-type oligosaccharide biosynthesis in digestive organs. This is Polypeptide N-acetylgalactosaminyltransferase 12 (Galnt12) from Mus musculus (Mouse).